Here is a 605-residue protein sequence, read N- to C-terminus: Elongation factor 4 (605 aa).

In terms of domain architecture, tr-type G spans 4 to 186 (SSVRNFCIIA…AIVNKVPAPK (183 aa)). Residues 16 to 21 (DHGKST) and 133 to 136 (NKID) contribute to the GTP site.

This sequence belongs to the TRAFAC class translation factor GTPase superfamily. Classic translation factor GTPase family. LepA subfamily.

It localises to the cell membrane. It carries out the reaction GTP + H2O = GDP + phosphate + H(+). Required for accurate and efficient protein synthesis under certain stress conditions. May act as a fidelity factor of the translation reaction, by catalyzing a one-codon backward translocation of tRNAs on improperly translocated ribosomes. Back-translocation proceeds from a post-translocation (POST) complex to a pre-translocation (PRE) complex, thus giving elongation factor G a second chance to translocate the tRNAs correctly. Binds to ribosomes in a GTP-dependent manner. The protein is Elongation factor 4 of Dehalococcoides mccartyi (strain ATCC BAA-2100 / JCM 16839 / KCTC 5957 / BAV1).